Here is a 351-residue protein sequence, read N- to C-terminus: Uroporphyrinogen decarboxylase (351 aa).

Substrate is bound by residues 25 to 29 (RQAGR), Asp-74, Tyr-151, Ser-206, and His-325.

Belongs to the uroporphyrinogen decarboxylase family. Homodimer.

The protein resides in the cytoplasm. The catalysed reaction is uroporphyrinogen III + 4 H(+) = coproporphyrinogen III + 4 CO2. It participates in porphyrin-containing compound metabolism; protoporphyrin-IX biosynthesis; coproporphyrinogen-III from 5-aminolevulinate: step 4/4. Functionally, catalyzes the decarboxylation of four acetate groups of uroporphyrinogen-III to yield coproporphyrinogen-III. This is Uroporphyrinogen decarboxylase from Chlorobium phaeobacteroides (strain BS1).